A 114-amino-acid polypeptide reads, in one-letter code: C-X-C motif chemokine 5 (114 aa).

The first 36 residues, 1 to 36 (MSLLSSRAARVPGPSSSLCALLVLLLLLTQPGPIAS), serve as a signal peptide directing secretion. 2 cysteine pairs are disulfide-bonded: C49–C75 and C51–C91.

The protein belongs to the intercrine alpha (chemokine CxC) family. In terms of assembly, monomer. Homodimer. In terms of processing, N-terminal processed forms ENA-78(8-78) and ENA-78(9-78) are produced by proteolytic cleavage after secretion from peripheral blood monocytes.

It localises to the secreted. Involved in neutrophil activation. In vitro, ENA-78(8-78) and ENA-78(9-78) show a threefold higher chemotactic activity for neutrophil granulocytes. The polypeptide is C-X-C motif chemokine 5 (CXCL5) (Homo sapiens (Human)).